The primary structure comprises 804 residues: G-type lectin S-receptor-like serine/threonine-protein kinase At1g61490 (804 aa).

Residues 1–24 (MGKKRIVFFACLLLFTVLLRFSYA) form the signal peptide. Residues 25 to 144 (GITTESPLSV…ASGRTLWESF (120 aa)) form the Bulb-type lectin domain. Topologically, residues 25 to 425 (GITTESPLSV…SELGGNKRNK (401 aa)) are extracellular. Residues Asn53, Asn94, Asn117, Asn134, Asn236, and Asn267 are each glycosylated (N-linked (GlcNAc...) asparagine). In terms of domain architecture, EGF-like spans 278 to 314 (PANSCDIYGVCGPFGLCIVSVPLKCKCLKGFVPHSTE). Intrachain disulfides connect Cys282-Cys294 and Cys288-Cys302. N-linked (GlcNAc...) asparagine glycosylation is found at Asn320, Asn336, and Asn375. Residues 333–415 (CQGNSTGKDV…GEILSIRLAH (83 aa)) form the PAN domain. 2 disulfide bridges follow: Cys368-Cys389 and Cys372-Cys378. A helical membrane pass occupies residues 426 to 446 (IIVASTVSLSLFVILTSAAFG). The Cytoplasmic portion of the chain corresponds to 447–804 (FWRYRVKHKA…EMTQSMILGR (358 aa)). Positions 490-775 (FSLSNKLGQG…DLPSPKQPTF (286 aa)) constitute a Protein kinase domain. ATP is bound by residues 496–504 (LGQGGFGSV) and Lys518. Residues Ser524 and Ser539 each carry the phosphoserine modification. A caM-binding region spans residues 579–596 (RKKLEVDWPKRFDIVQGI). Asp615 functions as the Proton acceptor in the catalytic mechanism. Residues Ser619 and Ser632 each carry the phosphoserine modification. Thr649 bears the Phosphothreonine mark. The residue at position 692 (Ser692) is a Phosphoserine.

It belongs to the protein kinase superfamily. Ser/Thr protein kinase family.

It is found in the cell membrane. It carries out the reaction L-seryl-[protein] + ATP = O-phospho-L-seryl-[protein] + ADP + H(+). The catalysed reaction is L-threonyl-[protein] + ATP = O-phospho-L-threonyl-[protein] + ADP + H(+). In Arabidopsis thaliana (Mouse-ear cress), this protein is G-type lectin S-receptor-like serine/threonine-protein kinase At1g61490.